The primary structure comprises 192 residues: MITISDAAQAHFVKLLADQPEGTHIRVFVISPGTAQAECGVSYCPPDAVESDDIELAFNGFSAMVDEKSAPFLEEASIDFVTDQLGSQLTLKAPNAKMRKVAGDAPLVERIEYVIQSEINPQLASHGGNIMLVEITGEGVAVLQFGGGCNGCSQVDITLKDGIEKQLLDMFPGELTGVRDVTDHQHGEHSYA.

Residues Cys-149 and Cys-152 each coordinate [4Fe-4S] cluster.

It belongs to the NfuA family. In terms of assembly, homodimer. The cofactor is [4Fe-4S] cluster.

In terms of biological role, involved in iron-sulfur cluster biogenesis. Binds a 4Fe-4S cluster, can transfer this cluster to apoproteins, and thereby intervenes in the maturation of Fe/S proteins. Could also act as a scaffold/chaperone for damaged Fe/S proteins. The chain is Fe/S biogenesis protein NfuA from Shewanella oneidensis (strain ATCC 700550 / JCM 31522 / CIP 106686 / LMG 19005 / NCIMB 14063 / MR-1).